We begin with the raw amino-acid sequence, 220 residues long: Cytidylate kinase (220 aa).

Position 9–17 (9–17) interacts with ATP; that stretch reads GPAASGKST.

It belongs to the cytidylate kinase family. Type 1 subfamily.

It localises to the cytoplasm. The enzyme catalyses CMP + ATP = CDP + ADP. The catalysed reaction is dCMP + ATP = dCDP + ADP. In Thermotoga sp. (strain RQ2), this protein is Cytidylate kinase.